Here is a 184-residue protein sequence, read N- to C-terminus: GTP cyclohydrolase 1 (184 aa).

Zn(2+) contacts are provided by Cys-75, His-78, and Cys-146.

It belongs to the GTP cyclohydrolase I family. As to quaternary structure, homomer.

The enzyme catalyses GTP + H2O = 7,8-dihydroneopterin 3'-triphosphate + formate + H(+). The protein operates within cofactor biosynthesis; 7,8-dihydroneopterin triphosphate biosynthesis; 7,8-dihydroneopterin triphosphate from GTP: step 1/1. The sequence is that of GTP cyclohydrolase 1 from Coxiella burnetii (strain Dugway 5J108-111).